A 396-amino-acid polypeptide reads, in one-letter code: Probable sugar efflux transporter (396 aa).

The Cytoplasmic segment spans residues 1-14; that stretch reads MTINPVSRKVAWLR. A helical membrane pass occupies residues 15–35; that stretch reads VVTLAIAAFIFNTTEFVPVGL. The Periplasmic segment spans residues 36-49; that stretch reads LSDIAESFHMQTAQ. A helical membrane pass occupies residues 50-70; it reads VGIMLTIYAWVVAVMSLPFML. Residues 71–80 are Cytoplasmic-facing; it reads LTSQMERRKL. Residues 81-101 form a helical membrane-spanning segment; it reads LIYLFVLFIASHVLSFLAWNF. Thr-102 is a topological domain (periplasmic). A helical transmembrane segment spans residues 103-123; sequence VLVISRIGIAFAHAIFWSITA. At 124–135 the chain is on the cytoplasmic side; sequence SLAIRLAPAGKR. The helical transmembrane segment at 136-156 threads the bilayer; the sequence is AQALSLIATGTALAMVLGLPI. Over 157–168 the chain is Periplasmic; that stretch reads GRVVGQYFGWRT. A helical membrane pass occupies residues 169-189; the sequence is TFFAIGMGALITLLCLIKLLP. At 190-208 the chain is on the cytoplasmic side; sequence KLPSEHSGSLKSLPLLFRR. Residues 209–229 form a helical membrane-spanning segment; the sequence is PALMSLYVLTVVVVTAHYTAY. At 230–245 the chain is on the periplasmic side; sequence SYIEPFVQNVAGLSAN. Residues 246–266 form a helical membrane-spanning segment; the sequence is FATVLLLILGGAGIIGSLVFG. The Cytoplasmic portion of the chain corresponds to 267-274; the sequence is KLGNRHAS. Residues 275-295 form a helical membrane-spanning segment; sequence SLVSIAIALLVVCLLLLLPAA. Over 296-300 the chain is Periplasmic; the sequence is ESEAH. Residues 301-321 form a helical membrane-spanning segment; it reads LAILSIFWGIAIMVIGLGMQV. Residues 322 to 332 lie on the Cytoplasmic side of the membrane; that stretch reads KVLALAPDATD. A helical membrane pass occupies residues 333-353; it reads VAMALFSGIFNIGIGAGALVG. The Periplasmic portion of the chain corresponds to 354–363; it reads NQVSLHWSMS. The chain crosses the membrane as a helical span at residues 364 to 384; sequence AIGYIGAIPACAALVWAVLIF. Residues 385 to 396 are Cytoplasmic-facing; it reads RKWPVTLEEQPH.

It belongs to the major facilitator superfamily. SotB (TC 2.A.1.2) family.

The protein localises to the cell inner membrane. Functionally, involved in the efflux of sugars. The physiological role may be the reduction of the intracellular concentration of toxic sugars or sugar metabolites. The polypeptide is Probable sugar efflux transporter (Salmonella typhimurium (strain LT2 / SGSC1412 / ATCC 700720)).